We begin with the raw amino-acid sequence, 148 residues long: Ubiquitin-conjugating enzyme E2 30 (148 aa).

Positions 1–147 constitute a UBC core domain; it reads MASKRINKEL…AQSWTQKYAM (147 aa). Cys85 serves as the catalytic Glycyl thioester intermediate.

This sequence belongs to the ubiquitin-conjugating enzyme family. Interacts with RGLG3 and RGLG4. In terms of tissue distribution, ubiquitously expressed at very low levels.

The enzyme catalyses S-ubiquitinyl-[E1 ubiquitin-activating enzyme]-L-cysteine + [E2 ubiquitin-conjugating enzyme]-L-cysteine = [E1 ubiquitin-activating enzyme]-L-cysteine + S-ubiquitinyl-[E2 ubiquitin-conjugating enzyme]-L-cysteine.. It participates in protein modification; protein ubiquitination. In terms of biological role, accepts the ubiquitin from the E1 complex and catalyzes its covalent attachment to other proteins. The chain is Ubiquitin-conjugating enzyme E2 30 (UBC30) from Arabidopsis thaliana (Mouse-ear cress).